The sequence spans 185 residues: Large ribosomal subunit protein bL25 (185 aa).

It belongs to the bacterial ribosomal protein bL25 family. CTC subfamily. In terms of assembly, part of the 50S ribosomal subunit; part of the 5S rRNA/L5/L18/L25 subcomplex. Contacts the 5S rRNA. Binds to the 5S rRNA independently of L5 and L18.

Its function is as follows. This is one of the proteins that binds to the 5S RNA in the ribosome where it forms part of the central protuberance. In Microcystis aeruginosa (strain NIES-843 / IAM M-2473), this protein is Large ribosomal subunit protein bL25.